The primary structure comprises 200 residues: NADH-quinone oxidoreductase subunit C (200 aa).

This sequence belongs to the complex I 30 kDa subunit family. In terms of assembly, NDH-1 is composed of 14 different subunits. Subunits NuoB, C, D, E, F, and G constitute the peripheral sector of the complex.

The protein localises to the cell inner membrane. It carries out the reaction a quinone + NADH + 5 H(+)(in) = a quinol + NAD(+) + 4 H(+)(out). Its function is as follows. NDH-1 shuttles electrons from NADH, via FMN and iron-sulfur (Fe-S) centers, to quinones in the respiratory chain. The immediate electron acceptor for the enzyme in this species is believed to be ubiquinone. Couples the redox reaction to proton translocation (for every two electrons transferred, four hydrogen ions are translocated across the cytoplasmic membrane), and thus conserves the redox energy in a proton gradient. The polypeptide is NADH-quinone oxidoreductase subunit C (Maricaulis maris (strain MCS10) (Caulobacter maris)).